Consider the following 310-residue polypeptide: Olfactory receptor 9A2 (310 aa).

The Extracellular portion of the chain corresponds to 1–24; it reads MMDNHSSATEFHLLGFPGSQGLHH. Asparagine 4 carries an N-linked (GlcNAc...) asparagine glycan. Residues 25–45 traverse the membrane as a helical segment; the sequence is ILFAIFFFFYLVTLMGNTVII. Over 46 to 53 the chain is Cytoplasmic; the sequence is VIVCVDKR. Residues 54–74 traverse the membrane as a helical segment; the sequence is LQSPMYFFLSHLSTLEILVTT. Topologically, residues 75 to 98 are extracellular; the sequence is IIVPMMLWGLLFLGCRQYLSLHVS. Over 117–135 the chain is Cytoplasmic; sequence DRYVAVCNPLRYNIIMNSS. The chain crosses the membrane as a helical span at residues 136-156; sequence TCIWVVIVSWVFGFLSEIWPI. Residues 157 to 193 are Extracellular-facing; it reads YATFQFTFRKSNSLDHFYCDRGQLLKLSCDNTLLTEF. Residues 194 to 213 traverse the membrane as a helical segment; that stretch reads ILFLMAVFILIGSLIPTIVS. Over 214-233 the chain is Cytoplasmic; the sequence is YTYIISTILKIPSASGRRKA. The chain crosses the membrane as a helical span at residues 234-254; that stretch reads FSTFASHFTCVVIGYGSCLFL. The Extracellular portion of the chain corresponds to 255–267; the sequence is YVKPKQTQGVEYN. A helical transmembrane segment spans residues 268–288; that stretch reads KIVSLLVSVLTPFLNPFIFTL. The Cytoplasmic segment spans residues 289–310; that stretch reads RNDKVKEALRDGMKRCCQLLKD.

The protein belongs to the G-protein coupled receptor 1 family.

The protein resides in the cell membrane. Odorant receptor. This chain is Olfactory receptor 9A2 (OR9A2), found in Homo sapiens (Human).